The primary structure comprises 140 residues: Large ribosomal subunit protein bL17 (140 aa).

Residues 121 to 140 (AAKGLDSGPTAEANDDDSEE) form a disordered region.

The protein belongs to the bacterial ribosomal protein bL17 family. Part of the 50S ribosomal subunit. Contacts protein L32.

This is Large ribosomal subunit protein bL17 from Rhodospirillum rubrum (strain ATCC 11170 / ATH 1.1.1 / DSM 467 / LMG 4362 / NCIMB 8255 / S1).